Consider the following 240-residue polypeptide: 2,3,4,5-tetrahydropyridine-2,6-dicarboxylate N-acetyltransferase (240 aa).

Belongs to the transferase hexapeptide repeat family. DapH subfamily.

The catalysed reaction is (S)-2,3,4,5-tetrahydrodipicolinate + acetyl-CoA + H2O = L-2-acetamido-6-oxoheptanedioate + CoA. It functions in the pathway amino-acid biosynthesis; L-lysine biosynthesis via DAP pathway; LL-2,6-diaminopimelate from (S)-tetrahydrodipicolinate (acetylase route): step 1/3. Functionally, catalyzes the transfer of an acetyl group from acetyl-CoA to tetrahydrodipicolinate. This is 2,3,4,5-tetrahydropyridine-2,6-dicarboxylate N-acetyltransferase from Bacillus cereus (strain G9842).